A 308-amino-acid chain; its full sequence is Transcriptional adapter 1-1 (308 aa).

Belongs to the TADA1 family. Component of the Spt-Ada-Gcn5 acetyltransferase (SAGA) complex consisting of wda/Taf5L, Saf6, Taf9, Taf10b, Taf12, Ada1, Spt3, Spt7, Spt20, Sf3b3, Sf3b5, Nipped-A/Tra1, a histone acetyltransferase (HAT) module made up of Gcn5, Ada2b (Isoform B), Ada3 and Sgf29, and a deubiquitinase (DUB) module made up of not/nonstop, Sgf11 and e(y)2 tethered to SAGA by Atxn7. Not a component of the Ada2a-containing ATAC complex.

The protein localises to the nucleus. Its function is as follows. Component of the transcription regulatory complex SAGA, a multiprotein complex that activates transcription by remodeling chromatin and mediating histone acetylation and deubiquitination. The SAGA complex predominantly acetylates histone H3. This is Transcriptional adapter 1-1 from Drosophila melanogaster (Fruit fly).